A 520-amino-acid polypeptide reads, in one-letter code: Cytochrome P450 monooxygenase btcC (520 aa).

The helical transmembrane segment at 2-22 (IFLLTLAGLKVLSIVILFGII) threads the bilayer. An N-linked (GlcNAc...) asparagine glycan is attached at asparagine 177. Heme is bound at residue cysteine 448. Asparagine 511 carries N-linked (GlcNAc...) asparagine glycosylation.

This sequence belongs to the cytochrome P450 family. Heme is required as a cofactor.

Its subcellular location is the membrane. Its pathway is secondary metabolite biosynthesis; terpenoid biosynthesis. Cytochrome P4590 monooxygenase part of the gene cluster that mediates the biosynthesis of betaestacins. The bifunctional terpene synthase btcA converts isopentenyl diphosphate (IPP) and dimethylallyl diphosphate (DMAPP) into the sesterterpene betaestacin I. The C-terminal prenyltransferase (PT) domain of btcA catalyzes formation of GFPP, whereas the N-terminal terpene cyclase (TC) domain catalyzes the cyclization of GFPP into betaestacin I. The cytochrome P450 monooxygenase btcB oxidizes the C25 methyl group of betaestacin I to yield the carboxylic acid betaestacin IV via the alcohol betaestacin III. The cytochrome P450 monooxygenase btcC further catalyzes the multistep oxidation of betaestacin IV to produce several compounds, including betaestacins Va, Vb, Vc and VI. The chain is Cytochrome P450 monooxygenase btcC from Colletotrichum orbiculare (strain 104-T / ATCC 96160 / CBS 514.97 / LARS 414 / MAFF 240422) (Cucumber anthracnose fungus).